Here is a 292-residue protein sequence, read N- to C-terminus: Triplex capsid protein 2 (292 aa).

This sequence belongs to the herpesviridae TRX2 protein family. In terms of assembly, interacts with TRX1 and major capisd protein/MCP.

Its subcellular location is the virion. It localises to the host nucleus. Structural component of the T=16 icosahedral capsid. The capsid is composed of pentamers and hexamers of major capsid protein/MCP, which are linked together by heterotrimers called triplexes. These triplexes are formed by a single molecule of triplex protein 1/TRX1 and two copies of triplex protein 2/TRX2. Additionally, TRX1 is required for efficient transport of TRX2 to the nucleus, which is the site of capsid assembly. The chain is Triplex capsid protein 2 from Elephas maximus (Indian elephant).